Here is a 246-residue protein sequence, read N- to C-terminus: Cold-regulated protein 27 (246 aa).

Disordered stretches follow at residues 1 to 39 and 151 to 232; these read MVGD…MYSA and EPEN…VVPL. Residues 168 to 180 are compositionally biased toward low complexity; that stretch reads SSGSASSLKQLSS.

It localises to the nucleus. In terms of biological role, together with COR28, involved in central circadian clock regulation and in flowering promotion, by binding to the chromatin of clock-associated evening genes TOC1, PRR5, ELF4 and cold-responsive genes in order to repress their transcription. Negative regulator of freezing tolerance. The protein is Cold-regulated protein 27 of Arabidopsis thaliana (Mouse-ear cress).